Consider the following 152-residue polypeptide: Lipoprotein signal peptidase (152 aa).

A run of 2 helical transmembrane segments spans residues 55–75 (NGRWFFVAVAALAVAGILYYL) and 87–107 (VALGLVMGGAVGNMIDRIATG). Residues D111 and D129 contribute to the active site. Residues 125–145 (FNVADICVTVGVGLLFLHLVL) traverse the membrane as a helical segment.

Belongs to the peptidase A8 family.

It localises to the cell membrane. It catalyses the reaction Release of signal peptides from bacterial membrane prolipoproteins. Hydrolyzes -Xaa-Yaa-Zaa-|-(S,diacylglyceryl)Cys-, in which Xaa is hydrophobic (preferably Leu), and Yaa (Ala or Ser) and Zaa (Gly or Ala) have small, neutral side chains.. Its pathway is protein modification; lipoprotein biosynthesis (signal peptide cleavage). In terms of biological role, this protein specifically catalyzes the removal of signal peptides from prolipoproteins. The chain is Lipoprotein signal peptidase from Symbiobacterium thermophilum (strain DSM 24528 / JCM 14929 / IAM 14863 / T).